The following is a 96-amino-acid chain: Teretoxin Tgu6.1 (96 aa).

Positions 1-16 (MRPFLVFVLIVSVSLA) are cleaved as a signal peptide. A propeptide spanning residues 17-52 (FSFEDMPNKGGDSVASITADQARGHKRNPLFPFAQR) is cleaved from the precursor.

Post-translationally, contains 3 disulfide bonds. As to expression, expressed by the venom duct.

The protein resides in the secreted. Its function is as follows. The recombinant protein causes paralysis to polychaete worms (Nereis virens), the natural prey of terebrid snails. This Terebra guttata (White spotted auger snail) protein is Teretoxin Tgu6.1.